The following is a 645-amino-acid chain: Rho GTPase-activating protein 25 (645 aa).

One can recognise a PH domain in the interval 46–151 (RPIKMGWLKK…WVKFLRRVAG (106 aa)). The region spanning 159–353 (QRLDETVAYE…MMIRDHEVLF (195 aa)) is the Rho-GAP domain. 2 disordered regions span residues 355–444 (KSKD…QTLP) and 469–550 (FWSP…EEEI). 2 positions are modified to phosphoserine: Ser362 and Ser395. Over residues 393–409 (TDSFSSMTSDSDTTSPT) the composition is skewed to low complexity. Thr406 carries the phosphothreonine modification. Over residues 420-431 (DSSKVPREKPGD) the composition is skewed to basic and acidic residues. Residues 487 to 504 (SQDLRQLSDSQRTSTYDN) are compositionally biased toward polar residues. The residue at position 536 (Ser536) is a Phosphoserine. Residues 541–644 (GKKNSGEEEI…VKSMKEPKTE (104 aa)) adopt a coiled-coil conformation.

In terms of biological role, GTPase activator for the Rho-type GTPases by converting them to an inactive GDP-bound state. In Homo sapiens (Human), this protein is Rho GTPase-activating protein 25 (ARHGAP25).